A 444-amino-acid polypeptide reads, in one-letter code: Jacalin-related lectin 42 (444 aa).

The residue at position 2 (Ala2) is an N-acetylalanine. Jacalin-type lectin domains are found at residues 2 to 143, 146 to 289, and 297 to 441; these read ALMV…YYIR, ATKS…YYAP, and TEKL…HVIP.

Belongs to the jacalin lectin family.

In Arabidopsis thaliana (Mouse-ear cress), this protein is Jacalin-related lectin 42 (JAL42).